The following is a 144-amino-acid chain: 3-hydroxyacyl-[acyl-carrier-protein] dehydratase FabZ (144 aa).

His51 is an active-site residue.

Belongs to the thioester dehydratase family. FabZ subfamily.

The protein localises to the cytoplasm. It catalyses the reaction a (3R)-hydroxyacyl-[ACP] = a (2E)-enoyl-[ACP] + H2O. Its function is as follows. Involved in unsaturated fatty acids biosynthesis. Catalyzes the dehydration of short chain beta-hydroxyacyl-ACPs and long chain saturated and unsaturated beta-hydroxyacyl-ACPs. The chain is 3-hydroxyacyl-[acyl-carrier-protein] dehydratase FabZ from Lactococcus lactis subsp. cremoris (strain SK11).